The primary structure comprises 1043 residues: Liprin-alpha-4 (1043 aa).

2 coiled-coil regions span residues 24–332 (EKVR…GRGG) and 426–470 (ILDA…RVTS). Residues 498-617 (SASPPLSGRS…AKRKGIKSSI (120 aa)) form a disordered region. A Phosphoserine modification is found at S500. The span at 505-516 (GRSTPKLTSRSA) shows a compositional bias: polar residues. Residue S541 is modified to Phosphoserine. The span at 544–555 (SREENREDKATI) shows a compositional bias: basic and acidic residues. Positions 590–602 (QDSNPSSSNSSQD) are enriched in low complexity. SAM domains lie at 688–754 (WDGP…MVSL), 803–867 (NHEW…LKRL), and 891–960 (WTND…LLAL). A coiled-coil region spans residues 864 to 890 (LKRLNYDRKELEKRREESQHEIKDVLV).

This sequence belongs to the liprin family. Liprin-alpha subfamily. Forms homodimers and heterodimers with liprins-alpha and liprins-beta. Interacts with the second PTPase domain of PTPRD, PTPRF and PTPRS. Interacts with RIMS1 and RIMS2. Interacts with GIT1 and GIT2. Interacts with GRIP1. Interacts with KIF1A.

Its subcellular location is the cytoplasm. It localises to the cell surface. In terms of biological role, may regulate the disassembly of focal adhesions. May localize receptor-like tyrosine phosphatases type 2A at specific sites on the plasma membrane, possibly regulating their interaction with the extracellular environment and their association with substrates. The chain is Liprin-alpha-4 (Ppfia4) from Rattus norvegicus (Rat).